Reading from the N-terminus, the 1024-residue chain is MNFIKDNSRALIQRMGMTVIKQITDDLFVWNVLNREEVNIICCEKVEQDAARGIIHMILKKGSESCNLFLKSLKEWNYPLFQDLNGQSLFHQTSEGDLDDLAQDLKDLYHTPSFLNFYPLGEDIDIIFNLKSTFTEPVLWRKDQHHHRVEQLTLNGLLQALQSPCIIEGESGKGKSTLLQRIAMLWGSGKCKALTKFKFVFFLRLSRAQGGLFETLCDQLLDIPGTIRKQTFMAMLLKLRQRVLFLLDGYNEFKPQNCPEIEALIKENHRFKNMVIVTTTTECLRHIRQFGALTAEVGDMTEDSAQALIREVLIKELAEGLLLQIQKSRCLRNLMKTPLFVVITCAIQMGESEFHSHTQTTLFHTFYDLLIQKNKHKHKGVAASDFIRSLDHCGDLALEGVFSHKFDFELQDVSSVNEDVLLTTGLLCKYTAQRFKPKYKFFHKSFQEYTAGRRLSSLLTSHEPEEVTKGNGYLQKMVSISDITSTYSSLLRYTCGSSVEATRAVMKHLAAVYQHGCLLGLSIAKRPLWRQESLQSVKNTTEQEILKAININSFVECGIHLYQESTSKSALSQEFEAFFQGKSLYINSGNIPDYLFDFFEHLPNCASALDFIKLDFYGGAMASWEKAAEDTGGIHMEEAPETYIPSRAVSLFFNWKQEFRTLEVTLRDFSKLNKQDIRYLGKIFSSATSLRLQIKRCAGVAGSLSLVLSTCKNIYSLMVEASPLTIEDERHITSVTNLKTLSIHDLQNQRLPGGLTDSLGNLKNLTKLIMDNIKMNEEDAIKLAEGLKNLKKMCLFHLTHLSDIGEGMDYIVKSLSSEPCDLEEIQLVSCCLSANAVKILAQNLHNLVKLSILDLSENYLEKDGNEALHELIDRMNVLEQLTALMLPWGCDVQGSLSSLLKHLEEVPQLVKLGLKNWRLTDTEIRILGAFFGKNPLKNFQQLNLAGNRVSSDGWLAFMGVFENLKQLVFFDFSTKEFLPDPALVRKLSQVLSKLTFLQEARLVGWQFDDDDLSVITGAFKLVTA.

Residues 1–88 (MNFIKDNSRA…PLFQDLNGQS (88 aa)) enclose the CARD domain. Residues 95-298 (EGDLDDLAQD…QFGALTAEVG (204 aa)) form a nucleotide-binding domain (NBD) region. Residues 163 to 476 (SPCIIEGESG…VTKGNGYLQK (314 aa)) form the NACHT domain. Position 169 to 176 (169 to 176 (GESGKGKS)) interacts with ATP. A winged-helix domain (WHD) region spans residues 356–463 (SHTQTTLFHT…RLSSLLTSHE (108 aa)). S533 is subject to Phosphoserine. LRR repeat units follow at residues 578 to 598 (FFQG…LFDF), 656 to 679 (KQEF…DIRY), 735 to 758 (VTNL…LTDS), 762 to 785 (LKNL…KLAE), 787 to 812 (LKNL…DYIV), 824 to 847 (EIQL…LHNL), 848 to 870 (VKLS…ALHE), 878 to 902 (LEQL…LLKH), 911 to 933 (KLGL…FFGK), 936 to 963 (LKNF…VFEN), 965 to 985 (KQLV…ALVR), and 999 to 1021 (EARL…AFKL).

In terms of assembly, homooligomer; homooligomerizes to induce formation of the NLRC4 inflammasome. Homooligomerizes following activation by pathogenic proteins. Component of the NLRC4 inflammasome, at least composed of NLRC4 and caspase-1 (CASP1). Some NLRC4 inflammasomes contain PYCARD/ASC, while some others directly contact and activate CASP1. Interacts (via CARD domain) with PYCARD/ASC, pro-caspase-1 (CASP1), NOD2, BCL10 and NALP1 (NAC) by CARD-CARD interaction. Interacts with EIF2AK2/PKR. Post-translationally, phosphorylated at Ser-533 following infection of macrophages with S.typhimurium (Salmonella). Phosphorylation is essential for NLRC4 inflammasome function to promote caspase-1 activation and pyroptosis. PRKCD phosphorylates Ser-533 in vitro. In terms of tissue distribution, isoform 2 is expressed ubiquitously, although highly expressed in lung and spleen. Isoform 1 is highly expressed in lung, followed by leukocytes especially monocytes, lymph node, colon, brain, prostate, placenta, spleen, bone marrow and fetal liver. Isoform 4 is only detected in brain.

It is found in the cytoplasm. The protein localises to the cytosol. It localises to the inflammasome. In terms of biological role, key component of inflammasomes that indirectly senses specific proteins from pathogenic bacteria and fungi and responds by assembling an inflammasome complex that promotes caspase-1 activation, cytokine production and macrophage pyroptosis. The NLRC4 inflammasome is activated as part of the innate immune response to a range of intracellular bacteria. In Homo sapiens (Human), this protein is NLR family CARD domain-containing protein 4 (NLRC4).